We begin with the raw amino-acid sequence, 413 residues long: Falstatin (413 aa).

The signal sequence occupies residues 1-21 (MNLLVFFCFFLLSCIVHLSRC). Residues 284–294 (LDSVNGNGFVW) carry the BC loop; binds and inhibits the active site cavity of cysteine proteases motif. Polar residues-rich tracts occupy residues 325–339 (ISVTNPVPIPKNSNT) and 346–360 (NNKQDGSQNNTTTNH). The segment at 325–367 (ISVTNPVPIPKNSNTNKDDSINNKQDGSQNNTTTNHFPKPREQ) is disordered.

This sequence belongs to the protease inhibitor I71 family. Oligomer; probably composed of 10 monomers. In terms of processing, proteolytically cleaved.

It localises to the secreted. The protein resides in the cytoplasmic vesicle. It is found in the secretory vesicle. Its subcellular location is the microneme. The protein localises to the parasitophorous vacuole lumen. It localises to the host cytoplasm. Its function is as follows. Cysteine protease inhibitor. Inhibits cysteine protease falcipains FP2 and FP3. Required for the invasion of host erythrocytes by merozoites. In the mosquito vector, essential for the gliding motility of hemocoel sporozoites and, therefore, for salivary gland invasion and the subsequent transmission from the mosquito to the mammalian host. Required for the invasion of host hepatocytes. During the liver stage, may prevent host hepatocyte cell death likely by inhibiting host cysteine proteases. In Plasmodium falciparum (isolate 3D7), this protein is Falstatin.